The following is a 390-amino-acid chain: Homeobox protein Meis1 (390 aa).

Residues 108–192 (GGDVCSSESF…IDLVIDDREG (85 aa)) enclose the MEIS N-terminal domain. Residues 190–202 (REGGSKSDSEDIT) show a composition bias toward basic and acidic residues. The segment at 190–279 (REGGSKSDSE…KKRHKKRGIF (90 aa)) is disordered. Residues 203–213 (RSANLTDQPSW) show a composition bias toward polar residues. The segment at residues 272-334 (RHKKRGIFPK…NARRRIVQPM (63 aa)) is a DNA-binding region (homeobox; TALE-type). The tract at residues 299 to 329 (YPSEEQKKQLAQDTGLTILQVNNWFINARRR) is interaction with DNA. Positions 335 to 390 (IDQSNRAVSQGTPYNPDGQPMGGFVMDGQQHMGIRAPGPMSGMGMNMGMEGQWHYM) are required for transcriptional activation.

This sequence belongs to the TALE/MEIS homeobox family. In terms of assembly, interacts with the N-terminal region of PBX1 to form a heterodimer which binds DNA including a cAMP-responsive sequence in CYP17. Also forms heterodimers with PBX2. Forms heterotrimers with PBX1 or PBX2 and a number of HOX proteins including HOXA9, HOXD4 and HOXD9 where it acts as a non-DNA-binding partner. Also forms heterotrimers with PBX1 and HOX proteins including HOXD9 and HOXD10 where PBX1 is the non-DNA-binding partner. Heterodimer with DLX3. Heterodimer with HOXB13. In terms of tissue distribution, expressed at low level in normal immunohepatopoietic tissues, including the fetal liver. Expressed in a subset of myeloid leukemia cell lines, with the highest expression seen in those with a megakaryocytic-erythroid phenotype. Also expressed at high levels in the cerebellum.

Its subcellular location is the nucleus. In terms of biological role, acts as a transcriptional regulator of PAX6. Acts as a transcriptional activator of PF4 in complex with PBX1 or PBX2. Required for hematopoiesis, megakaryocyte lineage development and vascular patterning. May function as a cofactor for HOXA7 and HOXA9 in the induction of myeloid leukemias. The chain is Homeobox protein Meis1 (MEIS1) from Homo sapiens (Human).